We begin with the raw amino-acid sequence, 484 residues long: PTS system MurNAc-GlcNAc-specific EIIBC component (484 aa).

The 83-residue stretch at 5–87 (QQLAERIIAA…AELSGVKLGD (83 aa)) folds into the PTS EIIB type-1 domain. Cysteine 27 serves as the catalytic Phosphocysteine intermediate; for EIIB activity. The 355-residue stretch at 130–484 (KSIANIFIPL…AMRQTDLLGD (355 aa)) folds into the PTS EIIC type-1 domain. The next 10 membrane-spanning stretches (helical) occupy residues 135–155 (IFIPLIPAFIGAGLIGGIAAV), 160–180 (MVAGYISGAWITQLITVFNVI), 200–220 (FGATPGLGGVIGGTTLLTGIA), 234–254 (LQPGQGGIIGVIFAVWILSIV), 274–294 (IALLIVGLLTIFIFMPLAGFV), 305–325 (IISIGGVFSGFIIGASFLPLV), 349–369 (LLPIAAMAGAGQVGAALALWV), 384–404 (ALPVGFLGIGEPLIYGVTLPL), 408–428 (FLTACIGGGIGGAVIGGIGHI), and 450–470 (LGYIAGLLTAYAGGFVCTYLF).

It localises to the cell membrane. It catalyses the reaction N-acetyl-beta-D-muramate-(1-&gt;4)-N-acetyl-D-glucosamine(out) + N(pros)-phospho-L-histidyl-[protein] = 6-phospho-N-acetyl-beta-D-muramate-(1-&gt;4)-N-acetyl-D-glucosamine(in) + L-histidyl-[protein]. The protein operates within cell wall biogenesis; peptidoglycan recycling. Functionally, the phosphoenolpyruvate-dependent sugar phosphotransferase system (sugar PTS), a major carbohydrate active transport system, catalyzes the phosphorylation of incoming sugar substrates concomitantly with their translocation across the cell membrane. This system is involved in the uptake and phosphorylation of MurNAc-GlcNAc, the principle peptidoglycan turnover product of S.aureus, yielding cytoplasmic MurNAc 6P-GlcNAc. The polypeptide is PTS system MurNAc-GlcNAc-specific EIIBC component (Staphylococcus aureus (strain bovine RF122 / ET3-1)).